A 471-amino-acid chain; its full sequence is Iroquois-class homeodomain protein IRX-2 (471 aa).

Residues 112–175 (LNDPAYRKNA…ANARRRLKKE (64 aa)) constitute a DNA-binding region (homeobox; TALE-type). 2 disordered regions span residues 176 to 373 (NKMT…SPYP) and 424 to 471 (APKA…QPYL). Ser186 is subject to Phosphoserine. Over residues 195-209 (DATRSKDESPDKAQE) the composition is skewed to basic and acidic residues. The segment covering 261–273 (DDLEDDEDDDEEG) has biased composition (acidic residues). Residues 355–367 (PAAAAPASTGAPP) show a composition bias toward low complexity. Residues 462-471 (VVGGGVQPYL) show a composition bias toward gly residues.

This sequence belongs to the TALE/IRO homeobox family.

Its subcellular location is the nucleus. The chain is Iroquois-class homeodomain protein IRX-2 (IRX2) from Homo sapiens (Human).